A 142-amino-acid polypeptide reads, in one-letter code: Hemoglobin subunit alpha (142 aa).

The Globin domain maps to 2 to 142; it reads VLSAADKNNV…VSTVLTSKYR (141 aa). A Phosphoserine modification is found at Ser4. N6-succinyllysine occurs at positions 8 and 12. Lys17 carries the N6-acetyllysine; alternate modification. Lys17 carries the post-translational modification N6-succinyllysine; alternate. Phosphotyrosine is present on Tyr25. Ser36 carries the post-translational modification Phosphoserine. Residue Lys41 is modified to N6-succinyllysine. Ser50 carries the phosphoserine modification. O2 is bound at residue His59. His88 lines the heme b pocket. Thr109 is modified (phosphothreonine). Ser125 and Ser132 each carry phosphoserine. Residues Thr135 and Thr138 each carry the phosphothreonine modification. The residue at position 139 (Ser139) is a Phosphoserine.

It belongs to the globin family. Heterotetramer of two alpha chains and two beta chains. Red blood cells.

Functionally, involved in oxygen transport from the lung to the various peripheral tissues. In terms of biological role, hemopressin acts as an antagonist peptide of the cannabinoid receptor CNR1. Hemopressin-binding efficiently blocks cannabinoid receptor CNR1 and subsequent signaling. This is Hemoglobin subunit alpha (HBA) from Cavia porcellus (Guinea pig).